Reading from the N-terminus, the 221-residue chain is Ribonuclease T (221 aa).

Residues 20-194 (VVIDIETAGF…YDTLQTANLF (175 aa)) form the Exonuclease domain. D23, E25, H181, and D186 together coordinate Mg(2+). Residue H181 is the Proton donor/acceptor of the active site.

This sequence belongs to the RNase T family. As to quaternary structure, homodimer. Mg(2+) serves as cofactor.

Its function is as follows. Trims short 3' overhangs of a variety of RNA species, leaving a one or two nucleotide 3' overhang. Responsible for the end-turnover of tRNA: specifically removes the terminal AMP residue from uncharged tRNA (tRNA-C-C-A). Also appears to be involved in tRNA biosynthesis. This chain is Ribonuclease T, found in Buchnera aphidicola subsp. Acyrthosiphon pisum (strain APS) (Acyrthosiphon pisum symbiotic bacterium).